A 324-amino-acid polypeptide reads, in one-letter code: tRNA-modifying protein YgfZ (324 aa).

W184 contacts folate.

This sequence belongs to the tRNA-modifying YgfZ family.

It is found in the cytoplasm. Folate-binding protein involved in regulating the level of ATP-DnaA and in the modification of some tRNAs. It is probably a key factor in regulatory networks that act via tRNA modification, such as initiation of chromosomal replication. The sequence is that of tRNA-modifying protein YgfZ from Vibrio vulnificus (strain YJ016).